Reading from the N-terminus, the 132-residue chain is Fatty acid-binding protein, liver (132 aa).

An N-acetylvaline modification is found at valine 1. Tyrosine 19 is subject to Phosphotyrosine; by Tyr-kinases.

This sequence belongs to the calycin superfamily. Fatty-acid binding protein (FABP) family.

The protein localises to the cytoplasm. FABPs are thought to play a role in the intracellular transport of long-chain fatty acids and their acyl-CoA esters. The polypeptide is Fatty acid-binding protein, liver (Ginglymostoma cirratum (Nurse shark)).